The following is a 737-amino-acid chain: Elongation factor 2 (737 aa).

The tr-type G domain occupies 18–262; the sequence is TRVRNIGIIA…TVIKFVPNPR (245 aa). Residues 27 to 34, 93 to 97, and 147 to 150 each bind GTP; these read AHVDHGKT, DTPGH, and NKVD. Position 604 is a diphthamide (His-604).

It belongs to the TRAFAC class translation factor GTPase superfamily. Classic translation factor GTPase family. EF-G/EF-2 subfamily.

Its subcellular location is the cytoplasm. Catalyzes the GTP-dependent ribosomal translocation step during translation elongation. During this step, the ribosome changes from the pre-translocational (PRE) to the post-translocational (POST) state as the newly formed A-site-bound peptidyl-tRNA and P-site-bound deacylated tRNA move to the P and E sites, respectively. Catalyzes the coordinated movement of the two tRNA molecules, the mRNA and conformational changes in the ribosome. In Sulfurisphaera tokodaii (strain DSM 16993 / JCM 10545 / NBRC 100140 / 7) (Sulfolobus tokodaii), this protein is Elongation factor 2 (fusA).